The following is a 328-amino-acid chain: Interferon regulatory factor 1 (328 aa).

The segment at residues 5–113 (RMRMRPWLEM…SAVRVYRMLP (109 aa)) is a DNA-binding region (IRF tryptophan pentad repeat). At Lys-78 the chain carries N6-acetyllysine. A disordered region spans residues 92–164 (EEVKDQSRNK…STLPDDHSSY (73 aa)). Residues 141-157 (GDSSPDTLSDGLSSSTL) show a composition bias toward low complexity. Residues Lys-276 and Lys-300 each participate in a glycyl lysine isopeptide (Lys-Gly) (interchain with G-Cter in SUMO) cross-link.

The protein belongs to the IRF family. As to quaternary structure, monomer. Homodimer. Interacts with EP300. Interacts with MYD88. Interacts with PIAS3. Interacts with SPOP. Phosphorylated by CK2 and this positively regulates its activity. Post-translationally, sumoylation represses the transcriptional activity and displays enhanced resistance to protein degradation. Sumoylated by UBE2I/UBC9 and SUMO1. Inactivates the tumor suppressor activity. Elevated levels in tumor cells. Major site is Lys-276. Sumoylation is enhanced by PIAS3. Desumoylated by SENP1 in tumor cells and appears to compete with ubiquitination on C-terminal sites. In terms of processing, ubiquitinated in a SPOP-depedent manner. Appears to compete with sumoylation on C-terminal sites.

It localises to the nucleus. It is found in the cytoplasm. With respect to regulation, activated by MYD88. Functionally, transcriptional regulator which displays a remarkable functional diversity in the regulation of cellular responses. Regulates transcription of IFN and IFN-inducible genes, host response to viral and bacterial infections, regulation of many genes expressed during hematopoiesis, inflammation, immune responses and cell proliferation and differentiation, regulation of the cell cycle and induction of growth arrest and programmed cell death following DNA damage. Stimulates both innate and acquired immune responses through the activation of specific target genes and can act as a transcriptional activator and repressor regulating target genes by binding to an interferon-stimulated response element (ISRE) in their promoters. Has an essentail role in IFNG-dependent immunity to mycobacteria. Binds to a consensus sequence in gene promoters. Its target genes for transcriptional activation activity include: genes involved in anti-viral response, such as IFN-alpha/beta, RIGI, TNFSF10/TRAIL, ZBP1, OAS1/2, PIAS1/GBP, EIF2AK2/PKR and RSAD2/viperin; antibacterial response, such as GBP2, GBP5 and NOS2/INOS; anti-proliferative response, such as p53/TP53, LOX and CDKN1A; apoptosis, such as BBC3/PUMA, CASP1, CASP7 and CASP8; immune response, such as IL7, IL12A/B and IL15, PTGS2/COX2 and CYBB; DNA damage responses and DNA repair, such as POLQ/POLH; MHC class I expression, such as TAP1, PSMB9/LMP2, PSME1/PA28A, PSME2/PA28B and B2M and MHC class II expression, such as CIITA; metabolic enzymes, such as ACOD1/IRG1. Represses genes involved in anti-proliferative response, such as BIRC5/survivin, CCNB1, CCNE1, CDK1, CDK2 and CDK4 and in immune response, such as FOXP3, IL4, ANXA2 and TLR4. Stimulates p53/TP53-dependent transcription through enhanced recruitment of EP300 leading to increased acetylation of p53/TP53. Plays an important role in immune response directly affecting NK maturation and activity, macrophage production of IL12, Th1 development and maturation of CD8+ T-cells. Also implicated in the differentiation and maturation of dendritic cells and in the suppression of regulatory T (Treg) cells development. Acts as a tumor suppressor and plays a role not only in antagonism of tumor cell growth but also in stimulating an immune response against tumor cells. The sequence is that of Interferon regulatory factor 1 (Irf1) from Rattus norvegicus (Rat).